Here is a 261-residue protein sequence, read N- to C-terminus: Probable RNA-binding protein ARP1 (261 aa).

In terms of domain architecture, RRM spans 17–94 (TKVFVGGLAW…RRANCNLASL (78 aa)). Residues 96 to 122 (GRLRKSPTMTSPQQGPKNGNRATPPHV) form a disordered region. The span at 102–116 (PTMTSPQQGPKNGNR) shows a compositional bias: polar residues.

Expressed in vasculature of leaves, roots and siliques.

Its subcellular location is the nucleus. Its function is as follows. Probable RNA-binding protein involved in the regulation of abscisic acid (ABA) response during seed germination. May regulate transcript levels of several germination-responsive genes under ABA. This chain is Probable RNA-binding protein ARP1, found in Arabidopsis thaliana (Mouse-ear cress).